The sequence spans 1073 residues: MHQPPESTAAAAAAADISARKMAHPAMFPRRGSGSGSASALNAAGTGVGSNATSSEDFPPPSLLQPPPPAASSTSGPQPPPPQSLNLLSQAQLQAQPLAPGGTQMKKKSGFQITSVTPAQISASISSNNSIAEDTESYDDLDESHTEDLSSSEILDVSLSRATDLGEPERSSSEETLNNFQEAETPGAVSPNQPHLPQPHLPHLPQQNVVINGNAHPHHLHHHHQIHHGHHLQHGHHHPSHVAVASASITGGPPSSPVSRKLSTTGSSDSITPVAPTSAVSSSGSPASVMTNMRAPSTTGGIGINSVTGTSTVNNVNITAVGSFNPNVTSSMLGNVNISTSNIPSAAGVSVGPGVTSGVNVNILSGMGNGTISSSAAVSSVPNAAAGMTGGSVSSQQQQPTVNTSRFRVVKLDSSSEPFKKGRWTCTEFYEKENAVPATEGVLINKVVETVKQNPIEVTSERESTSGSSVSSSVSTLSHYTESVGSGEMGAPTVVVQQQQQQQQQQQQQPALQGVTLQQMDFGSTGPQSIPAVSIPQSISQSQISQVQLQSQELSYQQKQGLQPVPLQATMSAATGIQPSPVNVVGVTSALGQQPSISSLAQPQLPYSQAAPPVQTPLPGAPPPQQLQYGQQQPMVSTQMAPGHVKSVTQNPASEYVQQQPILQTAMSSGQPSSAGVGAGTTVIPVAQPQGIQLPVQPTAVPAQPAGASVQPVGQAPAAVSAVPTGSQIANIGQQANIPTAVQQPSTQVPPSVIQQGAPPSSQVVPPAQTGIIHQGVQTSAPSLPQQLVIASQSSLLTVPPQPQGVEPVAQGIVSQQLPAVSSLPSASSISVTSQVSSTGPSGMPSAPTNLVPPQNIAQTPATQNGNLVQSVSQPPLIATNTNLPLAQQIPLSSTQFSAQSLAQAIGSQIEDARRAAEPSLVGLPQTISGDSGGMSAVSDGSSSSLAASASLFPLKVLPLTTPLVDGEDESSSGASVVAIDNKIEQAMDLVKSHLMYAVREEVEVLKEQIKELIEKNSQLEQENNLLKTLASPEQLAQFQAQLQTGSPPATTQPQGTTQPPAQPASQGSGPTA.

The tract at residues 1 to 98 (MHQPPESTAA…SQAQLQAQPL (98 aa)) is required for interaction with TGFBR1 and promotion of TGF-beta signaling. Disordered regions lie at residues 22–110 (MAHP…KKSG), 125–205 (ISSN…PHLP), 220–288 (LHHH…SPAS), 458–486 (VTSERESTSGSSVSSSVSTLSHYTESVGS), 607–628 (YSQAAPPVQTPLPGAPPPQQLQ), and 742–766 (VQQPSTQVPPSVIQQGAPPSSQVVP). Low complexity predominate over residues 36–45 (GSASALNAAG). A compositionally biased stretch (pro residues) spans 58–70 (FPPPSLLQPPPPA). The span at 84-100 (SLNLLSQAQLQAQPLAP) shows a compositional bias: low complexity. Residues 133 to 142 (EDTESYDDLD) show a composition bias toward acidic residues. Basic residues predominate over residues 220-240 (LHHHHQIHHGHHLQHGHHHPS). Residues 257–271 (PVSRKLSTTGSSDSI) show a composition bias toward polar residues. Residue Ser-263 is modified to Phosphoserine. Composition is skewed to low complexity over residues 272–288 (TPVAPTSAVSSSGSPAS) and 465–483 (TSGSSVSSSVSTLSHYTES). The span at 614-625 (VQTPLPGAPPPQ) shows a compositional bias: pro residues. The segment covering 742-764 (VQQPSTQVPPSVIQQGAPPSSQV) has biased composition (polar residues). Residues 1006–1027 (LKEQIKELIEKNSQLEQENNLL) form a leucine-zipper region. The segment at 1037–1073 (AQFQAQLQTGSPPATTQPQGTTQPPAQPASQGSGPTA) is disordered. Residues 1044–1073 (QTGSPPATTQPQGTTQPPAQPASQGSGPTA) show a composition bias toward low complexity.

The protein belongs to the TSC-22/Dip/Bun family. Forms homodimers. Forms heterodimers. Component of a complex composed of TSC22D1 (via N-terminus), TGFBR1 and TGFBR2; the interaction between TSC22D1 and TGFBR1 is inhibited by SMAD7 and promoted by TGFB1. Interacts with SMAD7; the interaction requires TGF-beta and the interaction is inhibited by TGFBR1. Interacts with TPT1/fortilin; interaction results in the destabilization of TSC22D1 protein and prevents TSC22D1-mediated apoptosis. Interacts with SMAD4 (via N-terminus). Interacts with ACVRL1/ALK1, ACVR1/ALK2, BMPR1A/ALK3, ACVR1B/ALK4, BMPR1B/ALK6, ACVR2A/ACTRII, and BMPR2. Interacts with SMAD6. Interacts with TFE3; the interaction is enhanced in the presence of TGF-beta. As to quaternary structure, forms a heterodimer with TSC22D4/THG1. In terms of assembly, forms a heterodimer with TSC22D4/THG1. Interacts with histone H1-2. Interacts with GNL3. Interacts with histone H1-2. In terms of tissue distribution, ubiquitously expressed in adult tissues. Expressed in the postmitotic epithelial compartment at the top of intestinal mucosal villi.

It is found in the cytoplasm. The protein resides in the nucleus. The protein localises to the cell membrane. It localises to the mitochondrion. Its function is as follows. Transcriptional repressor. Acts on the C-type natriuretic peptide (CNP) promoter. Acts to promote CASP3-mediated apoptosis. Positively regulates TGF-beta signaling by interacting with SMAD7 which inhibits binding of SMAD7 to TGFBR1, preventing recruitment of SMURF ubiquitin ligases to TGFBR1 and inhibiting SMURF-mediated ubiquitination and degradation of TGFBR1. Contributes to enhancement of TGF-beta signaling by binding to and modulating the transcription activator activity of SMAD4. Promotes TGF-beta-induced transcription of COL1A2; via its interaction with TFE3 at E-boxes in the gene proximal promoter. Plays a role in the repression of hematopoietic precursor cell growth. Promotes IL2 deprivation-induced apoptosis in T-lymphocytes, via repression of TSC22D3/GILZ transcription and activation of the caspase cascade. Functionally, may act to negatively regulate TGFB3 signaling and thereby inhibit cell death in mammary gland cells. Positively regulates cell death in response to TGFB3 during mammary gland involution. The sequence is that of TSC22 domain family protein 1 from Homo sapiens (Human).